The following is a 273-amino-acid chain: Tryptase (273 aa).

The first 18 residues, 1–18 (MLKLLLLTLPLLSSLVHA), serve as a signal peptide directing secretion. Positions 19-28 (APGPAMTREG) are cleaved as a propeptide — activation peptide. The Peptidase S1 domain occupies 29–270 (IVGGQEAHGN…YLDWIHHYVP (242 aa)). Asparagine 49 is a glycosylation site (N-linked (GlcNAc...) asparagine). Cysteine 57 and cysteine 73 are disulfide-bonded. Active-site charge relay system residues include histidine 72 and aspartate 119. Residue asparagine 130 is glycosylated (N-linked (GlcNAc...) asparagine). 3 disulfide bridges follow: cysteine 153–cysteine 228, cysteine 186–cysteine 209, and cysteine 218–cysteine 246. Catalysis depends on serine 222, which acts as the Charge relay system.

It belongs to the peptidase S1 family. Tryptase subfamily.

It catalyses the reaction Preferential cleavage: Arg-|-Xaa, Lys-|-Xaa, but with more restricted specificity than trypsin.. Functionally, tryptase is the major neutral protease present in mast cells and is secreted upon the coupled activation-degranulation response of this cell type. May play a role in innate immunity. The sequence is that of Tryptase (Tpsab1) from Mus musculus (Mouse).